Consider the following 104-residue polypeptide: Putative thioredoxin-4 (104 aa).

A Thioredoxin domain is found at 2–104 (SKVTNVSINT…QLRKILDSMK (103 aa)). Active-site nucleophile residues include C31 and C34. C31 and C34 form a disulfide bridge.

Belongs to the thioredoxin family.

In terms of biological role, participates in various redox reactions through the reversible oxidation of its active center dithiol to a disulfide and catalyzes dithiol-disulfide exchange reactions. The protein is Putative thioredoxin-4 (trxD) of Dictyostelium discoideum (Social amoeba).